Reading from the N-terminus, the 419-residue chain is Serine hydroxymethyltransferase (419 aa).

(6S)-5,6,7,8-tetrahydrofolate-binding positions include L121 and 125–127; that span reads GHL. Position 230 is an N6-(pyridoxal phosphate)lysine (K230). Residue 355-357 participates in (6S)-5,6,7,8-tetrahydrofolate binding; that stretch reads SPF.

It belongs to the SHMT family. In terms of assembly, homodimer. Pyridoxal 5'-phosphate serves as cofactor.

It is found in the cytoplasm. The catalysed reaction is (6R)-5,10-methylene-5,6,7,8-tetrahydrofolate + glycine + H2O = (6S)-5,6,7,8-tetrahydrofolate + L-serine. The protein operates within one-carbon metabolism; tetrahydrofolate interconversion. It participates in amino-acid biosynthesis; glycine biosynthesis; glycine from L-serine: step 1/1. Catalyzes the reversible interconversion of serine and glycine with tetrahydrofolate (THF) serving as the one-carbon carrier. This reaction serves as the major source of one-carbon groups required for the biosynthesis of purines, thymidylate, methionine, and other important biomolecules. Also exhibits THF-independent aldolase activity toward beta-hydroxyamino acids, producing glycine and aldehydes, via a retro-aldol mechanism. This chain is Serine hydroxymethyltransferase, found in Streptococcus uberis (strain ATCC BAA-854 / 0140J).